The chain runs to 91 residues: Elongation factor 1-beta (91 aa).

In terms of assembly, homodimer.

Its function is as follows. Promotes the exchange of GDP for GTP in EF-1-alpha/GDP, thus allowing the regeneration of EF-1-alpha/GTP that could then be used to form the ternary complex EF-1-alpha/GTP/AAtRNA. This Saccharolobus solfataricus (strain ATCC 35092 / DSM 1617 / JCM 11322 / P2) (Sulfolobus solfataricus) protein is Elongation factor 1-beta (ef1b).